A 706-amino-acid polypeptide reads, in one-letter code: SPX domain-containing membrane protein Os09g0521800 (706 aa).

The 144-residue stretch at 2-145 (VNFSNKLTKD…GYKFTDYYVR (144 aa)) folds into the SPX domain. The next 6 membrane-spanning stretches (helical) occupy residues 251-271 (MSLVLNLANTFLYMVNTYIVV), 281-301 (LGAAATACGAVIGSMAVAQVF), 318-338 (LLFSSVVLLLGNVMYAMAFDL), 340-359 (SLTILLLGRVLCGMGSARAV), 378-398 (AAFVSASALGMACGPALAGLL), and 414-434 (LPGWIMAFGWLVYLIWLWILF). The interval 475 to 498 (SEQDEEDDNGDEEHNETLSSSTTT) is disordered. Residues 476 to 488 (EQDEEDDNGDEEH) are compositionally biased toward acidic residues. Helical transmembrane passes span 520–540 (LLIYFMLKYAMEILLAESSVV), 554–574 (VFLAVLGLSVLPVNAIVGTYI), 583–603 (ILVASEMALLAGVMLSFKLTV), 611–631 (VCSAVLTFVSAEVVEGVNLSL), and 678–698 (LLNATLLPALLVCVASIAATL).

It belongs to the major facilitator superfamily.

The protein localises to the membrane. The sequence is that of SPX domain-containing membrane protein Os09g0521800 from Oryza sativa subsp. japonica (Rice).